The sequence spans 235 residues: Calcium-activated potassium channel subunit beta-2 (235 aa).

The interval M1–D45 is ball and chain. Residues M1–R46 are Cytoplasmic-facing. A helical membrane pass occupies residues A47–I67. Residues T68–N194 lie on the Extracellular side of the membrane. N-linked (GlcNAc...) asparagine glycosylation is found at N88, N96, and N119. Residues V195–A215 form a helical membrane-spanning segment. At M216–R235 the chain is on the cytoplasmic side.

This sequence belongs to the KCNMB (TC 8.A.14.1) family. KCNMB2 subfamily. As to quaternary structure, interacts with KCNMA1 tetramer. There are probably 4 molecules of KCMNB2 per KCNMA1 tetramer. Post-translationally, N-glycosylated.

The protein resides in the membrane. Functionally, regulatory subunit of the calcium activated potassium KCNMA1 (maxiK) channel. Modulates the calcium sensitivity and gating kinetics of KCNMA1, thereby contributing to KCNMA1 channel diversity. Acts as a negative regulator that confers rapid and complete inactivation of KCNMA1 channel complex. This is Calcium-activated potassium channel subunit beta-2 (Kcnmb2) from Mus musculus (Mouse).